A 108-amino-acid polypeptide reads, in one-letter code: UPF0060 membrane protein RER_49640 (108 aa).

The next 4 helical transmembrane spans lie at 8–28, 33–53, 62–82, and 87–107; these read LLFV…WQGI, GWIW…VATM, ILAA…VVMD, and DRFD…IMYA.

It belongs to the UPF0060 family.

The protein localises to the cell membrane. The sequence is that of UPF0060 membrane protein RER_49640 from Rhodococcus erythropolis (strain PR4 / NBRC 100887).